Consider the following 403-residue polypeptide: Argininosuccinate synthase (403 aa).

ATP-binding positions include 10-18 (AYSGGVDTS) and Ala38. Tyr89 contacts L-citrulline. Residue Gly119 coordinates ATP. Thr121, Asn125, and Asp126 together coordinate L-aspartate. L-citrulline is bound at residue Asn125. Residues Arg129, Ser177, Ser186, Glu262, and Tyr274 each contribute to the L-citrulline site.

The protein belongs to the argininosuccinate synthase family. Type 1 subfamily. In terms of assembly, homotetramer.

It is found in the cytoplasm. It catalyses the reaction L-citrulline + L-aspartate + ATP = 2-(N(omega)-L-arginino)succinate + AMP + diphosphate + H(+). Its pathway is amino-acid biosynthesis; L-arginine biosynthesis; L-arginine from L-ornithine and carbamoyl phosphate: step 2/3. The protein is Argininosuccinate synthase of Parasynechococcus marenigrum (strain WH8102).